The primary structure comprises 187 residues: Protein Flattop (187 aa).

Residues 97-187 form a disordered region; sequence THSGHGIHTH…TPQLEREEPQ (91 aa). The segment covering 122-131 has biased composition (polar residues); the sequence is EGDQTCNAPT. Residues 169 to 187 are compositionally biased toward basic and acidic residues; it reads KRREQSLEETPQLEREEPQ.

Belongs to the Flattop family.

It localises to the cytoplasm. The protein localises to the cytoskeleton. It is found in the cilium basal body. The protein resides in the cell projection. Its subcellular location is the cilium. It localises to the apical cell membrane. The protein localises to the cilium axoneme. Microtubule inner protein (MIP) part of the dynein-decorated doublet microtubules (DMTs) in cilia axoneme. Acts as a regulator of cilium basal body docking and positioning in mono- and multiciliated cells. Regulates basal body docking and cilia formation in multiciliated lung cells. Regulates kinocilium positioning and stereocilia bundle morphogenesis in the inner ear. This is Protein Flattop from Salmo salar (Atlantic salmon).